A 187-amino-acid chain; its full sequence is MLDDATYTPRLKTLYKDTIRGALKEEFGYKNEMQIPKLDKIVLNIGCGRAAVKDSKKAKSAQEDLTKIAGQKALTTVAKNSIAGFRVREGMPMGAKVTLRGERMYEFLDRLITIAMPRIRDFRGVSGTSFDGRGNYALGLKEHIVFPEIDFDKIDEAWGMDIVIATTANTDAEAKALLKAFNMPFNS.

Belongs to the universal ribosomal protein uL5 family. Part of the 50S ribosomal subunit; part of the 5S rRNA/L5/L18/L25 subcomplex. Contacts the 5S rRNA and the P site tRNA. Forms a bridge to the 30S subunit in the 70S ribosome.

In terms of biological role, this is one of the proteins that bind and probably mediate the attachment of the 5S RNA into the large ribosomal subunit, where it forms part of the central protuberance. In the 70S ribosome it contacts protein S13 of the 30S subunit (bridge B1b), connecting the 2 subunits; this bridge is implicated in subunit movement. Contacts the P site tRNA; the 5S rRNA and some of its associated proteins might help stabilize positioning of ribosome-bound tRNAs. In Ruegeria sp. (strain TM1040) (Silicibacter sp.), this protein is Large ribosomal subunit protein uL5.